The chain runs to 362 residues: CLIP domain-containing serine protease B10 (362 aa).

The signal sequence occupies residues 1 to 19 (MAKVVDCVLLLAFIAVVRG). One can recognise a Clip domain in the interval 22–75 (ACRTPDHRDGVCHPVQQCPSVRDEFFNSDRVLSEDEIDYLRKLQCKTKDVTICC). Disulfide bonds link Cys-23-Cys-74, Cys-33-Cys-66, and Cys-39-Cys-75. Residues 110–361 (IIGGNYTAID…YLDWIRQNIR (252 aa)) form the Peptidase S1 domain. An N-linked (GlcNAc...) asparagine glycan is attached at Asn-114. A disulfide bridge links Cys-140 with Cys-156. Catalysis depends on charge relay system residues His-155 and Asp-220. Asn-254 carries an N-linked (GlcNAc...) asparagine glycan. Intrachain disulfides connect Cys-285-Cys-300 and Cys-310-Cys-337. The active-site Charge relay system is the Ser-314.

The protein belongs to the peptidase S1 family. CLIP subfamily. As to quaternary structure, forms a covalent heterodimer with SRPN2; the interaction inhibits CLIPB10 catalytic activity. In terms of processing, cleaved by an unknown protease into an active form.

Its subcellular location is the secreted. With respect to regulation, inhibited by serpin SRPN2. In terms of biological role, serine protease which preferentially cleaves after arginine residues. Involved in the innate immune response against parasite P.bergei infection by activating the melanization cascade. Probably in the hemolymph, cleaves and activates prophenoloxidase (PPO), which functions in the formation of pigments such as melanin and other polyphenolic compounds. In the susceptible strain G3, appears to be dispensable for ookinete elimination which occurs by lysis. The sequence is that of CLIP domain-containing serine protease B10 from Anopheles gambiae (African malaria mosquito).